Consider the following 795-residue polypeptide: Probable alpha,alpha-trehalose-phosphate synthase [UDP-forming] 4 (795 aa).

The tract at residues 4–469 (PRLLVVSMSL…WADDFMKLTL (466 aa)) is glycosyltransferase.

In the N-terminal section; belongs to the glycosyltransferase 20 family. The protein in the C-terminal section; belongs to the trehalose phosphatase family.

It carries out the reaction D-glucose 6-phosphate + UDP-alpha-D-glucose = alpha,alpha-trehalose 6-phosphate + UDP + H(+). The sequence is that of Probable alpha,alpha-trehalose-phosphate synthase [UDP-forming] 4 (TPS4) from Arabidopsis thaliana (Mouse-ear cress).